We begin with the raw amino-acid sequence, 238 residues long: Flagellar L-ring protein (238 aa).

The N-terminal stretch at 1-17 is a signal peptide; sequence MIRKTLAASCAVLLMAG. The N-palmitoyl cysteine moiety is linked to residue C18. A lipid anchor (S-diacylglycerol cysteine) is attached at C18.

The protein belongs to the FlgH family. As to quaternary structure, the basal body constitutes a major portion of the flagellar organelle and consists of four rings (L,P,S, and M) mounted on a central rod.

It is found in the cell outer membrane. The protein localises to the bacterial flagellum basal body. Assembles around the rod to form the L-ring and probably protects the motor/basal body from shearing forces during rotation. This chain is Flagellar L-ring protein, found in Nitratidesulfovibrio vulgaris (strain ATCC 29579 / DSM 644 / CCUG 34227 / NCIMB 8303 / VKM B-1760 / Hildenborough) (Desulfovibrio vulgaris).